We begin with the raw amino-acid sequence, 397 residues long: MADLGCKKPSDCTVSRLLSVVESELRAGRDKGDPTEKQLQVVLEDAPLWQRFREVTNEMIVTKNGRRMFPVLKISVSGLDPNAMYSFLLDFAPTDGHRWKYVNGEWVPAGKPEPPNHSCVYIHPDSPNFGAHWMKAAISFSKVKLTNKLNGSGQIMLNSLHKYEPQVHIVRVGGPHRMVMNCSFPETQFIAVTAYQNEEITALKIKYNPFAKAFLDAKERNHPKDAPEAASEGQHMTYSHSPQAPHGCERYSALRGHRAAPYPPSYMQRNHSPTVNFFESSSNNLQVFSGHDSWTLPSSPHANLLSVPHTKGATSPGPSHYPCLWPVSNSAVSVTNPGSEVNSNTSSMFLRGNVPLPTASSSVQIPLQATVSGGMETQGEAPLVRLADSAWTSSHSF.

Residues 48 to 216 (LWQRFREVTN…YNPFAKAFLD (169 aa)) constitute a DNA-binding region (T-box). Positions 220-248 (RNHPKDAPEAASEGQHMTYSHSPQAPHGC) are disordered.

Its subcellular location is the nucleus. May be involved in the initial formation of the chordamesoderm. This Gallus gallus (Chicken) protein is T-box transcription factor TBX19.